A 244-amino-acid polypeptide reads, in one-letter code: MENFTALFGAQADPPPPPTALGFGPGKPPPPPPPPAGGGPGTAPPPTAATAPPGADKSGAGCGPFYLMRELPGSTELTGSTNLITHYNLEQAYNKFCGKKVKEKLSNFLPDLPGMIDLPGSHDNSSLRSLIEKPPILSSSFNPITGTMLAGFRLHTGPLPEQCRLMHIQPPKKKNKHKHKQSRTQDPVPPETPSDSDHKKKKKKKEEDPDRKRKKKEKKKKKNRHSPDHPGMGSSQASSSSSLR.

Disordered stretches follow at residues 1 to 56 and 171 to 244; these read MENF…PGAD and PKKK…SSLR. Over residues 26 to 47 the composition is skewed to pro residues; that stretch reads GKPPPPPPPPAGGGPGTAPPPT. The span at 171–182 shows a compositional bias: basic residues; the sequence is PKKKNKHKHKQS. Position 194 is a phosphoserine (Ser194). The span at 212–224 shows a compositional bias: basic residues; that stretch reads KRKKKEKKKKKNR. Ser226 is subject to Phosphoserine. Over residues 234–244 the composition is skewed to low complexity; that stretch reads SSQASSSSSLR.

This sequence belongs to the Mediator complex subunit 19 family. As to quaternary structure, component of the Mediator complex, which is composed of MED1, MED4, MED6, MED7, MED8, MED9, MED10, MED11, MED12, MED13, MED13L, MED14, MED15, MED16, MED17, MED18, MED19, MED20, MED21, MED22, MED23, MED24, MED25, MED26, MED27, MED29, MED30, MED31, CCNC, CDK8 and CDC2L6/CDK11. The MED12, MED13, CCNC and CDK8 subunits form a distinct module termed the CDK8 module. Mediator containing the CDK8 module is less active than Mediator lacking this module in supporting transcriptional activation. Individual preparations of the Mediator complex lacking one or more distinct subunits have been variously termed ARC, CRSP, DRIP, PC2, SMCC and TRAP.

The protein localises to the nucleus. Component of the Mediator complex, a coactivator involved in the regulated transcription of nearly all RNA polymerase II-dependent genes. Mediator functions as a bridge to convey information from gene-specific regulatory proteins to the basal RNA polymerase II transcription machinery. Mediator is recruited to promoters by direct interactions with regulatory proteins and serves as a scaffold for the assembly of a functional preinitiation complex with RNA polymerase II and the general transcription factors. In Homo sapiens (Human), this protein is Mediator of RNA polymerase II transcription subunit 19 (MED19).